The chain runs to 89 residues: Large ribosomal subunit protein bL27 (89 aa).

The interval 1–24 (MAHKKGTGSTRNGRDSRSQRLGVK) is disordered.

Belongs to the bacterial ribosomal protein bL27 family.

The protein is Large ribosomal subunit protein bL27 of Microcystis aeruginosa (strain NIES-843 / IAM M-2473).